A 785-amino-acid polypeptide reads, in one-letter code: MAVNGAQYIFGEFSPDEFNQFFVTPRCSVELPPYNETVSCGIKSTNEEYQRIEFGVNEVIETESSVLNNTDYSISSTLNPQAPEFILSCAPAQKTPDETNYNSIDCQFSDPTLTLDSGSNAENDGLSGGLGQRERKKKKKRPPGYYSYLEDVSDGVAPTEALVNGHANSSGLNSIGTEDTELTGDIPSLATPRTCNSPDNSVDFVHEAVSDDSVSSALDNTRTAGQPEVCRVTNSEQFCIPSETGRDSPLRTAVVQPYAGTDTTESLGVTNGQTLESSGEDTAANGVELHTVESTDSDQAKPEEASPTTEATATVAGSVPVNQPAKSWASLFHNSKPSASTSVVYVETKYTPPATSTLVPEKQVEVKEGPVPVSEDPVAIKIAELLENVKLVHKPVSLQPRGLINKGNWCYINATLQALVACPPMYHLMKSIPMYSKSQRPCTSTPMIDSFVRLMNEFTNMPVPPKAKQALGDKIVRDIRPGAAFEPTYIYRLLTVIKSSLSEKGRQEDAEEYLGFILNGLHEEMLTLKKLLSPHNEKLSVSNGPEVQTVREEEEQDEQGEGSEDEWEQVGPRNKSSVTRQADFVQTPITDIFGGHIRSVVYQQSSKESATLQPFFTLQLDIQSDKIRTVQDALESLVARESVQGYTTKTKQEVEISRRVTLEELPPVLVLHLKRFVYEKTGGCQKLIKNIEYPVDLEISKELLSPGVKSKIFKGQRTYRLFAVVYHHGNSATGDHYTTDVFQIGLNGWLRIDDQAVKVINQYQVVKPSAERTAYLLYYRRVDLL.

Composition is skewed to polar residues over residues 113-122 and 262-277; these read LTLDSGSNAE and DTTESLGVTNGQTLES. Disordered stretches follow at residues 113–145 and 262–314; these read LTLDSGSNAENDGLSGGLGQRERKKKKKRPPGY and DTTE…ATAT. Basic and acidic residues predominate over residues 290–304; that stretch reads HTVESTDSDQAKPEE. Residues 305-314 show a composition bias toward low complexity; the sequence is ASPTTEATAT. One can recognise a USP domain in the interval 401–782; it reads RGLINKGNWC…TAYLLYYRRV (382 aa). Cys410 (nucleophile) is an active-site residue. The interval 537-581 is disordered; that stretch reads EKLSVSNGPEVQTVREEEEQDEQGEGSEDEWEQVGPRNKSSVTRQ. The span at 552–568 shows a compositional bias: acidic residues; that stretch reads EEEEQDEQGEGSEDEWE. The Proton acceptor role is filled by His736.

This sequence belongs to the peptidase C19 family. USP10 subfamily.

Its subcellular location is the cytoplasm. It localises to the nucleus. It catalyses the reaction Thiol-dependent hydrolysis of ester, thioester, amide, peptide and isopeptide bonds formed by the C-terminal Gly of ubiquitin (a 76-residue protein attached to proteins as an intracellular targeting signal).. Functionally, hydrolase that can remove conjugated ubiquitin from target proteins such as p53/TP53, RPS2/us5, RPS3/us3, RPS10/eS10, BECN1, SNX3 and CFTR. Acts as an essential regulator of p53/TP53 stability: in unstressed cells, specifically deubiquitinates p53/TP53 in the cytoplasm, leading to counteracts MDM2 action and stabilize p53/TP53. Following DNA damage, translocates to the nucleus and deubiquitinates p53/TP53, leading to regulate the p53/TP53-dependent DNA damage response. Component of a regulatory loop that controls autophagy and p53/TP53 levels. Plays a key role in 40S ribosome subunit recycling when a ribosome has stalled during translation: acts both by inhibiting formation of stress granules, which store stalled translation pre-initiation complexes, and mediating deubiquitination of 40S ribosome subunits. Deubiquitinates CFTR in early endosomes, enhancing its endocytic recycling. This is Ubiquitin carboxyl-terminal hydrolase 10 (USP10) from Gallus gallus (Chicken).